Reading from the N-terminus, the 592-residue chain is Polyadenylate-binding protein, cytoplasmic and nuclear (592 aa).

Residues 1–10 are compositionally biased toward basic and acidic residues; that stretch reads MSDITEKTAE. Residues 1 to 43 are disordered; it reads MSDITEKTAEQLENLQINDDQQPAQSASAPSTSASESEASSVS. Polar residues predominate over residues 11-20; that stretch reads QLENLQINDD. Residues 21-43 show a composition bias toward low complexity; sequence QQPAQSASAPSTSASESEASSVS. RRM domains follow at residues 50–128, 138–215, 231–308, and 334–411; these read ASLY…WSER, GNIF…MHVP, TNIY…RAQK, and VNLF…IAQR. Positions 507-586 constitute a PABC domain; the sequence is NQFPRHQQQH…ALAAYENFKK (80 aa).

This sequence belongs to the polyadenylate-binding protein type-1 family.

The protein localises to the cytoplasm. The protein resides in the nucleus. In terms of biological role, binds the poly(A) tail of mRNA. Appears to be an important mediator of the multiple roles of the poly(A) tail in mRNA biogenesis, stability and translation. In the nucleus, involved in both mRNA cleavage and polyadenylation. Is also required for efficient mRNA export to the cytoplasm. Acts in concert with a poly(A)-specific nuclease (PAN) to affect poly(A) tail shortening, which may occur concomitantly with either nucleocytoplasmic mRNA transport or translational initiation. In the cytoplasm, stimulates translation initiation and regulates mRNA decay through translation termination-coupled poly(A) shortening, probably mediated by PAN. The protein is Polyadenylate-binding protein, cytoplasmic and nuclear (PAB1) of Kluyveromyces lactis (strain ATCC 8585 / CBS 2359 / DSM 70799 / NBRC 1267 / NRRL Y-1140 / WM37) (Yeast).